A 349-amino-acid chain; its full sequence is UPF0324 inner membrane protein YeiH (349 aa).

Over 1-12 the chain is Periplasmic; that stretch reads MTELTLQNHCRT. A helical membrane pass occupies residues 13 to 35; the sequence is MWHFIPGLALSAVITGVALWGGA. The Cytoplasmic portion of the chain corresponds to 36–38; it reads IPA. The helical transmembrane segment at 39 to 61 threads the bilayer; that stretch reads VAGAGFSALTLAILLGMVIGNTI. Residues 62–99 lie on the Periplasmic side of the membrane; sequence YPQIWKQCDGGVLFAKQHLLRLGIILYGFRLTFSQIAD. The helical transmembrane segment at 100 to 122 threads the bilayer; that stretch reads VGISGIVIDVLTLSSTFMLACFL. The Cytoplasmic segment spans residues 123-131; the sequence is GQKVFGLDR. A helical membrane pass occupies residues 132-151; it reads HTSWLIGAGSSICGAAAVLA. Residues 152–162 lie on the Periplasmic side of the membrane; it reads TEPVVKAEASK. Residues 163 to 185 form a helical membrane-spanning segment; that stretch reads VTVAVATVVIFGTIAIFLYPAMY. The Cytoplasmic segment spans residues 186 to 261; sequence PLLAHWFSPE…SPATGAEKSK (76 aa). A helical transmembrane segment spans residues 262–284; sequence ITIPWFAIFFIVVAIFNSFHLLP. Residues 285-290 are Periplasmic-facing; it reads KAVVDM. The chain crosses the membrane as a helical span at residues 291 to 313; it reads LVTLDTVLLAMAMAALGLTTHVS. The Cytoplasmic segment spans residues 314 to 322; it reads ALKKAGAKP. Residues 323-345 traverse the membrane as a helical segment; that stretch reads LLMALALFAWLIIGGGAINVLIH. Residues 346–349 lie on the Periplasmic side of the membrane; that stretch reads SLIA.

It belongs to the UPF0324 family.

The protein localises to the cell inner membrane. In Salmonella typhimurium (strain LT2 / SGSC1412 / ATCC 700720), this protein is UPF0324 inner membrane protein YeiH (yeiH).